The primary structure comprises 1359 residues: MLQEQSELMSTVMNNTPTTVAALAAVAAASETNGKLGSEEQPEITIPKPRSSAQLEQLLYRYRAIQNHPKENKLEIKAIEDTFRNISRDQDIYETKLDTLRKSIDKGFQYDEDLLNKHLVALQLLEKDTDVPDYFLDLPDTKNDNTTAIEVDYSEKKPIKISADFNAKAKSLGLESKFSNATKTALGDPDTEIRISARISNRINELERLPANLGTYSLDDCLEFITKDDLSSRMDTFKIKALVELKSLKLLTKQKSIRQKLINNVASQAHHNIPYLRDSPFTAAAQRSVQIRSKVIVPQTVRLAEELERQQLLEKRKKERNLHLQKINSIIDFIKERQSEQWSRQERCFQFGRLGASLHNQMEKDEQKRIERTAKQRLAALKSNDEEAYLKLLDQTKDTRITQLLRQTNSFLDSLSEAVRAQQNEAKILHGEEVQPITDEEREKTDYYEVAHRIKEKIDKQPSILVGGTLKEYQLRGLEWMVSLYNNHLNGILADEMGLGKTIQSISLITYLYEVKKDIGPFLVIVPLSTITNWTLEFEKWAPSLNTIIYKGTPNQRHSLQHQIRVGNFDVLLTTYEYIIKDKSLLSKHDWAHMIIDEGHRMKNAQSKLSFTISHYYRTRNRLILTGTPLQNNLPELWALLNFVLPKIFNSAKTFEDWFNTPFANTGTQEKLELTEEETLLIIRRLHKVLRPFLLRRLKKEVEKDLPDKVEKVIKCKLSGLQQQLYQQMLKHNALFVGAGTEGATKGGIKGLNNKIMQLRKICNHPFVFDEVEGVVNPSRGNSDLLFRVAGKFELLDRVLPKFKASGHRVLMFFQMTQVMDIMEDFLRMKDLKYMRLDGSTKTEERTEMLNAFNAPDSDYFCFLLSTRAGGLGLNLQTADTVIIFDTDWNPHQDLQAQDRAHRIGQKNEVRILRLITTDSVEEVILERAMQKLDIDGKVIQAGKFDNKSTAEEQEAFLRRLIESETNRDDDDKAELDDDELNDTLARSADEKILFDKIDKERMNQERADAKAQGLRVPPPRLIQLDELPKVFREDIEEHFKKEDSEPLGRIRQKKRVYYDDGLTEEQFLEAVEDDNMSLEDAIKKRREARERRRLRQNGTKENEIETLENTPEASETSLIENNSFTAAVDEETNADKETTASRSKRRSSRKKRTISIVTAEDKENTQEESTSQENGGAKVEEEVKSSSVEIINGSESKKKKPKLTVKIKLNKTTVLENNDGKRAEEKPESKSPAKKTAAKKTKTKSKSLGIFPTVEKLVEEMREQLDEVDSHPRTSIFEKLPSKRDYPDYFKVIEKPMAIDIILKNCKNGTYKTLEEVRQALQTMFENARFYNEEGSWVYVDADKLNEFTDEWFKEHSS.

S38 carries the phosphoserine modification. An HSA domain is found at 307 to 383 (LERQQLLEKR…AKQRLAALKS (77 aa)). In terms of domain architecture, Helicase ATP-binding spans 482–647 (VSLYNNHLNG…WALLNFVLPK (166 aa)). Residue 495–502 (DEMGLGKT) participates in ATP binding. The short motif at 597 to 600 (DEGH) is the DEGH box element. Residues 795 to 956 (LLDRVLPKFK…NKSTAEEQEA (162 aa)) enclose the Helicase C-terminal domain. The segment at 1090 to 1246 (RERRRLRQNG…TAAKKTKTKS (157 aa)) is disordered. Residues 1108–1126 (LENTPEASETSLIENNSFT) show a composition bias toward polar residues. Basic residues-rich tracts occupy residues 1143 to 1154 (RSKRRSSRKKRT) and 1198 to 1210 (KKKK…KIKL). Residues 1219 to 1232 (NDGKRAEEKPESKS) are compositionally biased toward basic and acidic residues. Basic residues predominate over residues 1233–1246 (PAKKTAAKKTKTKS). Positions 1257–1357 (KLVEEMREQL…EFTDEWFKEH (101 aa)) constitute a Bromo domain.

It belongs to the SNF2/RAD54 helicase family. Interacts directly with SFH1, CSE4, histones H3, H4 and H2B, and via its N-terminus, with RSC8. Interacts with LDB7, NPL6 and RTT102. Component of the two forms of the RSC complex composed of at least either RSC1 or RSC2, and ARP7, ARP9, LDB7, NPL6, RSC3, RSC30, RSC4, RSC58, RSC6, RSC8, RSC9, SFH1, STH1, HTL1 and probably RTT102. The complexes interact with histone and histone variant components of centromeric chromatin.

The protein resides in the nucleus. The catalysed reaction is ATP + H2O = ADP + phosphate + H(+). Its function is as follows. Catalytic component of the chromatin structure-remodeling complex (RSC), which is involved in transcription regulation and nucleosome positioning. RSC is responsible for the transfer of a histone octamer from a nucleosome core particle to naked DNA. The reaction requires ATP and involves an activated RSC-nucleosome intermediate. Remodeling reaction also involves DNA translocation, DNA twist and conformational change. As a reconfigurer of centromeric and flanking nucleosomes, RSC complex is required both for proper kinetochore function in chromosome segregation and, via a PKC1-dependent signaling pathway, for organization of the cellular cytoskeleton. This subunit is the essential ATPase of the complex. It is a DNA translocase capable of nucleosome remodeling. Required for full expression of early meiotic genes. Essential for mitotic growth and repression of CHA1 expression. Also involved in G2 phase control. This Saccharomyces cerevisiae (strain ATCC 204508 / S288c) (Baker's yeast) protein is Nuclear protein STH1/NPS1 (STH1).